A 267-amino-acid chain; its full sequence is Dihydropteroate synthase (267 aa).

The Pterin-binding domain maps to 1 to 251 (MTKTKIMGIL…NVELNAKLAK (251 aa)). Mg(2+) is bound at residue Asn-11. Residues Thr-51, Asp-84, Asn-103, Asp-167, Lys-203, and 239–241 (RVH) each bind (7,8-dihydropterin-6-yl)methyl diphosphate.

The protein belongs to the DHPS family. As to quaternary structure, homodimer. Mg(2+) serves as cofactor.

It catalyses the reaction (7,8-dihydropterin-6-yl)methyl diphosphate + 4-aminobenzoate = 7,8-dihydropteroate + diphosphate. The protein operates within cofactor biosynthesis; tetrahydrofolate biosynthesis; 7,8-dihydrofolate from 2-amino-4-hydroxy-6-hydroxymethyl-7,8-dihydropteridine diphosphate and 4-aminobenzoate: step 1/2. Its function is as follows. Catalyzes the condensation of para-aminobenzoate (pABA) with 6-hydroxymethyl-7,8-dihydropterin diphosphate (DHPt-PP) to form 7,8-dihydropteroate (H2Pte), the immediate precursor of folate derivatives. In Staphylococcus aureus (strain MRSA252), this protein is Dihydropteroate synthase (folP).